Consider the following 77-residue polypeptide: Acyl carrier protein (77 aa).

A Carrier domain is found at 1–76; it reads MADFEKIKSI…DVIKFIDKLK (76 aa). An O-(pantetheine 4'-phosphoryl)serine modification is found at Ser36.

Belongs to the acyl carrier protein (ACP) family. In terms of processing, 4'-phosphopantetheine is transferred from CoA to a specific serine of apo-ACP by AcpS. This modification is essential for activity because fatty acids are bound in thioester linkage to the sulfhydryl of the prosthetic group.

It localises to the cytoplasm. It functions in the pathway lipid metabolism; fatty acid biosynthesis. In terms of biological role, carrier of the growing fatty acid chain in fatty acid biosynthesis. The polypeptide is Acyl carrier protein (Leptospira biflexa serovar Patoc (strain Patoc 1 / Ames)).